We begin with the raw amino-acid sequence, 172 residues long: Shikimate kinase (172 aa).

14–19 (GAGKTT) is an ATP binding site. Thr-18 contacts Mg(2+). Residues Asp-36, Arg-60, and Gly-82 each contribute to the substrate site. Arg-119 lines the ATP pocket. Arg-137 contributes to the substrate binding site.

Belongs to the shikimate kinase family. In terms of assembly, monomer. Requires Mg(2+) as cofactor.

The protein localises to the cytoplasm. The enzyme catalyses shikimate + ATP = 3-phosphoshikimate + ADP + H(+). It participates in metabolic intermediate biosynthesis; chorismate biosynthesis; chorismate from D-erythrose 4-phosphate and phosphoenolpyruvate: step 5/7. Catalyzes the specific phosphorylation of the 3-hydroxyl group of shikimic acid using ATP as a cosubstrate. The polypeptide is Shikimate kinase (Thermobifida fusca (strain YX)).